We begin with the raw amino-acid sequence, 714 residues long: DNA ligase (714 aa).

Residues aspartate 40 to aspartate 44, serine 90 to leucine 91, and glutamate 124 each bind NAD(+). The N6-AMP-lysine intermediate role is filled by lysine 126. Residues arginine 147, glutamate 183, lysine 304, and lysine 328 each contribute to the NAD(+) site. Zn(2+)-binding residues include cysteine 420, cysteine 423, cysteine 438, and cysteine 444. The BRCT domain maps to threonine 634 to glycine 714.

This sequence belongs to the NAD-dependent DNA ligase family. LigA subfamily. It depends on Mg(2+) as a cofactor. Mn(2+) is required as a cofactor.

It catalyses the reaction NAD(+) + (deoxyribonucleotide)n-3'-hydroxyl + 5'-phospho-(deoxyribonucleotide)m = (deoxyribonucleotide)n+m + AMP + beta-nicotinamide D-nucleotide.. DNA ligase that catalyzes the formation of phosphodiester linkages between 5'-phosphoryl and 3'-hydroxyl groups in double-stranded DNA using NAD as a coenzyme and as the energy source for the reaction. It is essential for DNA replication and repair of damaged DNA. In Sphingopyxis alaskensis (strain DSM 13593 / LMG 18877 / RB2256) (Sphingomonas alaskensis), this protein is DNA ligase.